The primary structure comprises 69 residues: Conotoxin AbVIE (69 aa).

An N-terminal signal peptide occupies residues 1-17 (VLIIAVLFLTACQLTTA). The propeptide occupies 18 to 40 (ETSSRGKQKHRALRSTDKYSRMT). 3 cysteine pairs are disulfide-bonded: cysteine 43–cysteine 57, cysteine 50–cysteine 61, and cysteine 56–cysteine 66.

This sequence belongs to the conotoxin O1 superfamily. Expressed by the venom duct.

It is found in the secreted. The sequence is that of Conotoxin AbVIE from Conus abbreviatus (Abbreviated cone).